Reading from the N-terminus, the 222-residue chain is UPF0758 protein Cag_1513 (222 aa).

The MPN domain maps to 100–222; that stretch reads KIMAAGDVFE…WYSFRERGLL (123 aa). Residues H171, H173, and D184 each coordinate Zn(2+). The JAMM motif motif lies at 171-184; the sequence is HNHPSGDVNPSNAD.

The protein belongs to the UPF0758 family.

The sequence is that of UPF0758 protein Cag_1513 from Chlorobium chlorochromatii (strain CaD3).